The following is an 876-amino-acid chain: Alanine--tRNA ligase (876 aa).

K74 bears the N6-acetyllysine mark. Residues H564, H568, C666, and H670 each coordinate Zn(2+).

It belongs to the class-II aminoacyl-tRNA synthetase family. As to quaternary structure, homotetramer. The cofactor is Zn(2+).

It localises to the cytoplasm. It catalyses the reaction tRNA(Ala) + L-alanine + ATP = L-alanyl-tRNA(Ala) + AMP + diphosphate. Catalyzes the attachment of alanine to tRNA(Ala) in a two-step reaction: alanine is first activated by ATP to form Ala-AMP and then transferred to the acceptor end of tRNA(Ala). Also edits incorrectly charged Ser-tRNA(Ala) and Gly-tRNA(Ala) via its editing domain. In Escherichia coli (strain SMS-3-5 / SECEC), this protein is Alanine--tRNA ligase.